The sequence spans 455 residues: uncharacterized protein (455 aa).

The next 11 helical transmembrane spans lie at F26–I46, G53–G73, L77–A97, W111–I131, A146–W166, A191–V211, L232–V252, A256–L276, I278–G298, L323–G343, and A357–A377. The segment at P384 to D455 is disordered.

It is found in the cell membrane. This is an uncharacterized protein from Mycobacterium tuberculosis (strain CDC 1551 / Oshkosh).